A 62-amino-acid chain; its full sequence is DNA-binding protein 7 (62 aa).

This sequence belongs to the 7 kDa DNA-binding/endoribonuclease P2 family. As to quaternary structure, monomer.

The protein resides in the cytoplasm. Can constrain negative DNA supercoils. May be involved in maintaining the integrity of the genome at high temperature. The sequence is that of DNA-binding protein 7 from Metallosphaera cuprina (strain Ar-4).